A 313-amino-acid polypeptide reads, in one-letter code: Ribosomal RNA small subunit methyltransferase H (313 aa).

Residues 34–36 (GGH), Asp53, Phe80, Asp101, and Gln108 each bind S-adenosyl-L-methionine.

It belongs to the methyltransferase superfamily. RsmH family.

The protein localises to the cytoplasm. The catalysed reaction is cytidine(1402) in 16S rRNA + S-adenosyl-L-methionine = N(4)-methylcytidine(1402) in 16S rRNA + S-adenosyl-L-homocysteine + H(+). In terms of biological role, specifically methylates the N4 position of cytidine in position 1402 (C1402) of 16S rRNA. This Lacticaseibacillus casei (strain BL23) (Lactobacillus casei) protein is Ribosomal RNA small subunit methyltransferase H.